The following is a 437-amino-acid chain: ATP-dependent protease ATPase subunit HslU (437 aa).

ATP is bound by residues isoleucine 18, 60 to 65 (GVGKTE), aspartate 250, glutamate 315, and arginine 387.

Belongs to the ClpX chaperone family. HslU subfamily. As to quaternary structure, a double ring-shaped homohexamer of HslV is capped on each side by a ring-shaped HslU homohexamer. The assembly of the HslU/HslV complex is dependent on binding of ATP.

Its subcellular location is the cytoplasm. Its function is as follows. ATPase subunit of a proteasome-like degradation complex; this subunit has chaperone activity. The binding of ATP and its subsequent hydrolysis by HslU are essential for unfolding of protein substrates subsequently hydrolyzed by HslV. HslU recognizes the N-terminal part of its protein substrates and unfolds these before they are guided to HslV for hydrolysis. The chain is ATP-dependent protease ATPase subunit HslU from Dinoroseobacter shibae (strain DSM 16493 / NCIMB 14021 / DFL 12).